The chain runs to 227 residues: Cytochrome c oxidase subunit 2 (227 aa).

Topologically, residues 1–14 are mitochondrial intermembrane; sequence MPYPMQLGFQDATS. A helical membrane pass occupies residues 15–45; it reads PIMEELTYFHDHTLMIVFLISSLVLYIIILM. Over 46-59 the chain is Mitochondrial matrix; it reads LTTKLTHTSTMDAQ. A helical membrane pass occupies residues 60–87; sequence EVETIWTILPAVILVLIALPSLRILYMM. The Mitochondrial intermembrane portion of the chain corresponds to 88 to 227; the sequence is DEIYNPYLTI…YFEKWSSMMQ (140 aa). The Cu cation site is built by histidine 161, cysteine 196, glutamate 198, cysteine 200, histidine 204, and methionine 207. Mg(2+) is bound at residue glutamate 198. A Phosphotyrosine modification is found at tyrosine 218.

This sequence belongs to the cytochrome c oxidase subunit 2 family. As to quaternary structure, component of the cytochrome c oxidase (complex IV, CIV), a multisubunit enzyme composed of 14 subunits. The complex is composed of a catalytic core of 3 subunits MT-CO1, MT-CO2 and MT-CO3, encoded in the mitochondrial DNA, and 11 supernumerary subunits COX4I, COX5A, COX5B, COX6A, COX6B, COX6C, COX7A, COX7B, COX7C, COX8 and NDUFA4, which are encoded in the nuclear genome. The complex exists as a monomer or a dimer and forms supercomplexes (SCs) in the inner mitochondrial membrane with NADH-ubiquinone oxidoreductase (complex I, CI) and ubiquinol-cytochrome c oxidoreductase (cytochrome b-c1 complex, complex III, CIII), resulting in different assemblies (supercomplex SCI(1)III(2)IV(1) and megacomplex MCI(2)III(2)IV(2)). Found in a complex with TMEM177, COA6, COX18, COX20, SCO1 and SCO2. Interacts with TMEM177 in a COX20-dependent manner. Interacts with COX20. Interacts with COX16. It depends on Cu cation as a cofactor.

It is found in the mitochondrion inner membrane. The catalysed reaction is 4 Fe(II)-[cytochrome c] + O2 + 8 H(+)(in) = 4 Fe(III)-[cytochrome c] + 2 H2O + 4 H(+)(out). Its function is as follows. Component of the cytochrome c oxidase, the last enzyme in the mitochondrial electron transport chain which drives oxidative phosphorylation. The respiratory chain contains 3 multisubunit complexes succinate dehydrogenase (complex II, CII), ubiquinol-cytochrome c oxidoreductase (cytochrome b-c1 complex, complex III, CIII) and cytochrome c oxidase (complex IV, CIV), that cooperate to transfer electrons derived from NADH and succinate to molecular oxygen, creating an electrochemical gradient over the inner membrane that drives transmembrane transport and the ATP synthase. Cytochrome c oxidase is the component of the respiratory chain that catalyzes the reduction of oxygen to water. Electrons originating from reduced cytochrome c in the intermembrane space (IMS) are transferred via the dinuclear copper A center (CU(A)) of subunit 2 and heme A of subunit 1 to the active site in subunit 1, a binuclear center (BNC) formed by heme A3 and copper B (CU(B)). The BNC reduces molecular oxygen to 2 water molecules using 4 electrons from cytochrome c in the IMS and 4 protons from the mitochondrial matrix. In Osphranter robustus (Wallaroo), this protein is Cytochrome c oxidase subunit 2 (MT-CO2).